An 84-amino-acid chain; its full sequence is Delta-conotoxin-like Bt6.4 (84 aa).

An N-terminal signal peptide occupies residues 1–22 (MKLTCMVIVAVLFLTAWTSVMA). Residues 23–57 (DGSINRPDIAEGWQKFFSKARDEMKNRAASELNKR) constitute a propeptide that is removed on maturation. 3 cysteine pairs are disulfide-bonded: Cys-58–Cys-74, Cys-65–Cys-78, and Cys-73–Cys-82.

This sequence belongs to the conotoxin O1 superfamily. Expressed by the venom duct.

It is found in the secreted. This toxin activates voltage-gated sodium channels. It shifts the voltage-dependence of activation to more hyperpolarized potentials but has only little effect on channel inactivation. It is active on Nav1.3/SCN3A (EC(50)=3.98 nM), Nav1.4/SCN4A (EC(50)=4.99 nM), Nav1.6/SCN8A (EC(50)=1.27 nM) and Nav1.7/SCN9A (EC(50)=2.42 nM) voltage-gated sodium channels. In vivo, it induces nocifensive or pain-like behaviors in mice when injected intraplantarly. This chain is Delta-conotoxin-like Bt6.4, found in Conus betulinus (Beech cone).